The following is a 199-amino-acid chain: Fe/S biogenesis protein NfuA (199 aa).

Positions 151 and 154 each coordinate [4Fe-4S] cluster.

Belongs to the NfuA family. As to quaternary structure, homodimer. [4Fe-4S] cluster serves as cofactor.

Involved in iron-sulfur cluster biogenesis. Binds a 4Fe-4S cluster, can transfer this cluster to apoproteins, and thereby intervenes in the maturation of Fe/S proteins. Could also act as a scaffold/chaperone for damaged Fe/S proteins. The sequence is that of Fe/S biogenesis protein NfuA from Xanthomonas oryzae pv. oryzae (strain MAFF 311018).